The sequence spans 1383 residues: DNA-directed RNA polymerase subunit beta (1383 aa).

It belongs to the RNA polymerase beta chain family. In terms of assembly, the RNAP catalytic core consists of 2 alpha, 1 beta, 1 beta' and 1 omega subunit. When a sigma factor is associated with the core the holoenzyme is formed, which can initiate transcription.

It carries out the reaction RNA(n) + a ribonucleoside 5'-triphosphate = RNA(n+1) + diphosphate. Functionally, DNA-dependent RNA polymerase catalyzes the transcription of DNA into RNA using the four ribonucleoside triphosphates as substrates. This chain is DNA-directed RNA polymerase subunit beta, found in Xanthomonas axonopodis pv. citri (strain 306).